The following is a 277-amino-acid chain: Peptide deformylase 1A, chloroplastic (277 aa).

Residues C196 and H238 each contribute to the Zn(2+) site. Residue E239 is part of the active site. H242 is a Zn(2+) binding site.

It belongs to the polypeptide deformylase family. Requires Zn(2+) as cofactor.

It is found in the plastid. It localises to the chloroplast stroma. The enzyme catalyses N-terminal N-formyl-L-methionyl-[peptide] + H2O = N-terminal L-methionyl-[peptide] + formate. Its function is as follows. Removes the formyl group from the N-terminal Met of newly synthesized proteins. The protein is Peptide deformylase 1A, chloroplastic (PDF1A) of Solanum lycopersicum (Tomato).